The following is a 311-amino-acid chain: Aspartate carbamoyltransferase catalytic subunit (311 aa).

Carbamoyl phosphate is bound by residues Arg55 and Thr56. Residue Lys85 participates in L-aspartate binding. The carbamoyl phosphate site is built by Arg106, His135, and Gln138. Positions 168 and 230 each coordinate L-aspartate. Residues Leu268 and Pro269 each coordinate carbamoyl phosphate.

The protein belongs to the aspartate/ornithine carbamoyltransferase superfamily. ATCase family. In terms of assembly, heterododecamer (2C3:3R2) of six catalytic PyrB chains organized as two trimers (C3), and six regulatory PyrI chains organized as three dimers (R2).

The enzyme catalyses carbamoyl phosphate + L-aspartate = N-carbamoyl-L-aspartate + phosphate + H(+). It participates in pyrimidine metabolism; UMP biosynthesis via de novo pathway; (S)-dihydroorotate from bicarbonate: step 2/3. Catalyzes the condensation of carbamoyl phosphate and aspartate to form carbamoyl aspartate and inorganic phosphate, the committed step in the de novo pyrimidine nucleotide biosynthesis pathway. This is Aspartate carbamoyltransferase catalytic subunit from Buchnera aphidicola subsp. Schizaphis graminum (strain Sg).